The chain runs to 417 residues: UDP-N-acetylglucosamine 1-carboxyvinyltransferase 2 (417 aa).

Position 22–23 (22–23 (KN)) interacts with phosphoenolpyruvate. A UDP-N-acetyl-alpha-D-glucosamine-binding site is contributed by Arg-94. The active-site Proton donor is Cys-118. Residue Cys-118 is modified to 2-(S-cysteinyl)pyruvic acid O-phosphothioketal. Residues 123-127 (RPIDL), Asp-306, and Ile-328 contribute to the UDP-N-acetyl-alpha-D-glucosamine site.

The protein belongs to the EPSP synthase family. MurA subfamily.

It is found in the cytoplasm. The enzyme catalyses phosphoenolpyruvate + UDP-N-acetyl-alpha-D-glucosamine = UDP-N-acetyl-3-O-(1-carboxyvinyl)-alpha-D-glucosamine + phosphate. It participates in cell wall biogenesis; peptidoglycan biosynthesis. Its function is as follows. Cell wall formation. Adds enolpyruvyl to UDP-N-acetylglucosamine. The protein is UDP-N-acetylglucosamine 1-carboxyvinyltransferase 2 of Clostridium tetani (strain Massachusetts / E88).